A 428-amino-acid polypeptide reads, in one-letter code: 3-phosphoshikimate 1-carboxyvinyltransferase (428 aa).

3 residues coordinate 3-phosphoshikimate: lysine 23, serine 24, and arginine 28. Lysine 23 lines the phosphoenolpyruvate pocket. Glycine 97 and arginine 125 together coordinate phosphoenolpyruvate. 3-phosphoshikimate is bound by residues serine 170, serine 171, glutamine 172, serine 198, aspartate 314, asparagine 337, and lysine 341. Glutamine 172 is a phosphoenolpyruvate binding site. Aspartate 314 functions as the Proton acceptor in the catalytic mechanism. Phosphoenolpyruvate-binding residues include arginine 345, arginine 387, and lysine 412.

Belongs to the EPSP synthase family. In terms of assembly, monomer.

The protein resides in the cytoplasm. The enzyme catalyses 3-phosphoshikimate + phosphoenolpyruvate = 5-O-(1-carboxyvinyl)-3-phosphoshikimate + phosphate. It functions in the pathway metabolic intermediate biosynthesis; chorismate biosynthesis; chorismate from D-erythrose 4-phosphate and phosphoenolpyruvate: step 6/7. Its function is as follows. Catalyzes the transfer of the enolpyruvyl moiety of phosphoenolpyruvate (PEP) to the 5-hydroxyl of shikimate-3-phosphate (S3P) to produce enolpyruvyl shikimate-3-phosphate and inorganic phosphate. The sequence is that of 3-phosphoshikimate 1-carboxyvinyltransferase from Serratia proteamaculans (strain 568).